We begin with the raw amino-acid sequence, 220 residues long: 7-cyano-7-deazaguanine synthase (220 aa).

An ATP-binding site is contributed by 7–17 (LSGGMDSSTLA). C187, C195, C198, and C201 together coordinate Zn(2+).

It belongs to the QueC family. Zn(2+) is required as a cofactor.

It carries out the reaction 7-carboxy-7-deazaguanine + NH4(+) + ATP = 7-cyano-7-deazaguanine + ADP + phosphate + H2O + H(+). It functions in the pathway purine metabolism; 7-cyano-7-deazaguanine biosynthesis. Its function is as follows. Catalyzes the ATP-dependent conversion of 7-carboxy-7-deazaguanine (CDG) to 7-cyano-7-deazaguanine (preQ(0)). This is 7-cyano-7-deazaguanine synthase from Methanospirillum hungatei JF-1 (strain ATCC 27890 / DSM 864 / NBRC 100397 / JF-1).